A 59-amino-acid polypeptide reads, in one-letter code: Ribosome modulation factor (59 aa).

Belongs to the ribosome modulation factor family.

It localises to the cytoplasm. In terms of biological role, during stationary phase, converts 70S ribosomes to an inactive dimeric form (100S ribosomes). This Aeromonas veronii (strain B565) protein is Ribosome modulation factor.